The chain runs to 130 residues: Sec-independent protein translocase protein TatB (130 aa).

A helical membrane pass occupies residues 1–21; the sequence is MFDISFTELIVIGIVALVVIG. The interval 70 to 130 is disordered; it reads VDSFQNSVHS…TPKEPRQSGS (61 aa). Basic and acidic residues-rich tracts occupy residues 80–89 and 96–111; these read EINKIQETAD and PEKE…KTEP.

The protein belongs to the TatB family. The Tat system comprises two distinct complexes: a TatABC complex, containing multiple copies of TatA, TatB and TatC subunits, and a separate TatA complex, containing only TatA subunits. Substrates initially bind to the TatABC complex, which probably triggers association of the separate TatA complex to form the active translocon.

The protein localises to the cell inner membrane. Part of the twin-arginine translocation (Tat) system that transports large folded proteins containing a characteristic twin-arginine motif in their signal peptide across membranes. Together with TatC, TatB is part of a receptor directly interacting with Tat signal peptides. TatB may form an oligomeric binding site that transiently accommodates folded Tat precursor proteins before their translocation. The chain is Sec-independent protein translocase protein TatB from Nitrosomonas eutropha (strain DSM 101675 / C91 / Nm57).